A 199-amino-acid chain; its full sequence is Glycerol-3-phosphate acyltransferase (199 aa).

Helical transmembrane passes span 3-23, 55-75, 79-99, 113-133, and 155-175; these read IKIL…AYIV, VITL…ATFI, FSYS…TIFL, VFFA…GLAF, and YFLG…LLII.

This sequence belongs to the PlsY family. As to quaternary structure, probably interacts with PlsX.

It is found in the cell inner membrane. It catalyses the reaction an acyl phosphate + sn-glycerol 3-phosphate = a 1-acyl-sn-glycero-3-phosphate + phosphate. It functions in the pathway lipid metabolism; phospholipid metabolism. Functionally, catalyzes the transfer of an acyl group from acyl-phosphate (acyl-PO(4)) to glycerol-3-phosphate (G3P) to form lysophosphatidic acid (LPA). This enzyme utilizes acyl-phosphate as fatty acyl donor, but not acyl-CoA or acyl-ACP. In Endomicrobium trichonymphae, this protein is Glycerol-3-phosphate acyltransferase.